A 202-amino-acid polypeptide reads, in one-letter code: Small ribosomal subunit protein uS4 (202 aa).

Residues 23 to 42 (RKNARRAYAPGQHGQARKKR) are disordered. Residues 90–153 (MRLDNTVFRL…RSQDLVKRNM (64 aa)) form the S4 RNA-binding domain.

The protein belongs to the universal ribosomal protein uS4 family. In terms of assembly, part of the 30S ribosomal subunit. Contacts protein S5. The interaction surface between S4 and S5 is involved in control of translational fidelity.

In terms of biological role, one of the primary rRNA binding proteins, it binds directly to 16S rRNA where it nucleates assembly of the body of the 30S subunit. With S5 and S12 plays an important role in translational accuracy. The polypeptide is Small ribosomal subunit protein uS4 (Microcystis aeruginosa (strain NIES-843 / IAM M-2473)).